A 185-amino-acid polypeptide reads, in one-letter code: Celestoxin (185 aa).

The N-terminal stretch at 1–20 (MKFIAAVLLVALLCPKDSTS) is a signal peptide. A propeptide spanning residues 21 to 148 (LASRLSGLLG…GLPVALPVSV (128 aa)) is cleaved from the precursor.

In terms of tissue distribution, expressed by the mandibular venom gland.

Its subcellular location is the secreted. Has a hypotensive activity. The polypeptide is Celestoxin (Caribicus warreni (Haitian giant galliwasp)).